Reading from the N-terminus, the 801-residue chain is Phenylalanine--tRNA ligase beta subunit (801 aa).

The 115-residue stretch at 39-153 folds into the tRNA-binding domain; it reads ADGLSKLVVG…EEAVPGDAIF (115 aa). The 76-residue stretch at 406–481 folds into the B5 domain; the sequence is TEPVEVSTSL…RIYGYDKLPT (76 aa). 4 residues coordinate Mg(2+): Asp-459, Asp-465, Glu-468, and Glu-469. Residues 708–801 enclose the FDX-ACB domain; sequence TKFPAMTRDV…LTEQVGAEVR (94 aa).

This sequence belongs to the phenylalanyl-tRNA synthetase beta subunit family. Type 1 subfamily. As to quaternary structure, tetramer of two alpha and two beta subunits. Mg(2+) serves as cofactor.

The protein resides in the cytoplasm. It catalyses the reaction tRNA(Phe) + L-phenylalanine + ATP = L-phenylalanyl-tRNA(Phe) + AMP + diphosphate + H(+). In Streptococcus pyogenes serotype M1, this protein is Phenylalanine--tRNA ligase beta subunit.